We begin with the raw amino-acid sequence, 1203 residues long: Nitric oxide synthase 3 (1203 aa).

Positions 1–71 (MGNLKSVAQE…PPEGPKFPRV (71 aa)) are disordered. G2 is lipidated: N-myristoyl glycine. 2 S-palmitoyl cysteine lipidation sites follow: C15 and C26. Residues 15-27 (CGLGLGLGLGLCG) are compositionally biased toward gly residues. Position 33 is a phosphothreonine (T33). The span at 33–66 (TPAPEPSRAPASLLPPAPEHSPPSSPLTQPPEGP) shows a compositional bias: pro residues. Residues C94 and C99 each contribute to the Zn(2+) site. The tract at residues 98–486 (RCLGSLVFPR…PDPWKGSAAK (389 aa)) is interaction with NOSIP. S102 contacts (6R)-L-erythro-5,6,7,8-tetrahydrobiopterin. Phosphoserine; by CDK5 is present on S114. Residue C184 coordinates heme b. L-arginine is bound by residues Q247, W356, Y357, and E361. Residue R365 participates in (6R)-L-erythro-5,6,7,8-tetrahydrobiopterin binding. N366 is an L-arginine binding site. Residues A446, W447, and F460 each contribute to the (6R)-L-erythro-5,6,7,8-tetrahydrobiopterin site. Y475 contributes to the heme b binding site. Positions 491–510 (TRKKTFKEVANAVKISASLM) are calmodulin-binding. A Phosphothreonine; by AMPK modification is found at T495. Positions 520–703 (ATILYGSETG…AFRGWAQAAF (184 aa)) constitute a Flavodoxin-like domain. FMN contacts are provided by S526, E527, T528, R530, S572, and T573. 3 positions are modified to phosphoserine: S615, S633, and S638. The FMN site is built by S654, C661, E687, and Q691. Residues 756 to 1002 (RKMFQATIRS…IRGAPSFRLP (247 aa)) form the FAD-binding FR-type domain. R776 serves as a coordination point for NADP(+). FAD is bound at residue H798. S836 carries the phosphoserine modification. 9 residues coordinate FAD: R938, Y940, S941, T956, A958, Y962, V975, C976, and S977. NADP(+) is bound by residues T1016, R1049, S1078, R1079, K1085, Y1087, and Q1089. Phosphothreonine is present on T1175. S1177 is subject to Phosphoserine; by AMPK. S1179 bears the Phosphoserine mark.

This sequence belongs to the NOS family. In terms of assembly, homodimer. Interacts with NOSIP and NOSTRIN. Interacts with HSP90AB1. Forms a complex with ASL, ASS1 and SLC7A1; the complex regulates cell-autonomous L-arginine synthesis and citrulline recycling while channeling extracellular L-arginine to nitric oxide synthesis pathway. Heme b serves as cofactor. The cofactor is FAD. Requires FMN as cofactor. It depends on (6R)-L-erythro-5,6,7,8-tetrahydrobiopterin as a cofactor. Post-translationally, phosphorylation by AMPK at Ser-1177 in the presence of Ca(2+)-calmodulin (CaM) activates activity. In absence of Ca(2+)-calmodulin, AMPK also phosphorylates Thr-495, resulting in inhibition of activity. Phosphorylation of Ser-114 by CDK5 reduces activity. In terms of tissue distribution, platelets, placenta, liver and kidney.

It is found in the cell membrane. Its subcellular location is the membrane. It localises to the caveola. The protein localises to the cytoplasm. The protein resides in the cytoskeleton. It is found in the golgi apparatus. It carries out the reaction 2 L-arginine + 3 NADPH + 4 O2 + H(+) = 2 L-citrulline + 2 nitric oxide + 3 NADP(+) + 4 H2O. Its activity is regulated as follows. Stimulated by calcium/calmodulin. Inhibited by NOSIP and NOSTRIN. Produces nitric oxide (NO) which is implicated in vascular smooth muscle relaxation through a cGMP-mediated signal transduction pathway. NO mediates vascular endothelial growth factor (VEGF)-induced angiogenesis in coronary vessels and promotes blood clotting through the activation of platelets. Functionally, lacks eNOS activity, dominant-negative form that may down-regulate eNOS activity by forming heterodimers with isoform 1. In Homo sapiens (Human), this protein is Nitric oxide synthase 3.